A 186-amino-acid chain; its full sequence is Protein SPMIP2 (186 aa).

The interval 163–186 (SSLPRASKPPKLPKLPKKEKKRKH) is disordered. Basic residues predominate over residues 176–186 (KLPKKEKKRKH).

The protein is Protein SPMIP2 of Homo sapiens (Human).